The chain runs to 406 residues: Vacuole membrane protein 1 (406 aa).

The segment covering 1–21 (MAENGKNCDQRRVAMNKEHHN) has biased composition (basic and acidic residues). The disordered stretch occupies residues 1-35 (MAENGKNCDQRRVAMNKEHHNGNFTDPSSVNEKKR). Ala2 is modified (N-acetylalanine). Residues 2–43 (AENGKNCDQRRVAMNKEHHNGNFTDPSSVNEKKRREREERQN) are Cytoplasmic-facing. The helical transmembrane segment at 44-64 (IVLWRQPLITLQYFSLEILVI) threads the bilayer. Over 65–77 (LKEWTSKLWHRQS) the chain is Extracellular. A helical membrane pass occupies residues 78 to 98 (IVVSFLLLLAVLIATYYVEGV). At 99 to 109 (HQQYVQRIEKQ) the chain is on the cytoplasmic side. The chain crosses the membrane as a helical span at residues 110–130 (FLLYAYWIGLGILSSVGLGTG). At 131 to 250 (LHTFLLYLGP…ASRAKLAVQK (120 aa)) the chain is on the extracellular side. The VTT domain stretch occupies residues 173–316 (GTEGTISLWS…FVIITFSKHI (144 aa)). A helical transmembrane segment spans residues 251-271 (LVQKVGFFGILACASIPNPLF). Residues 272–273 (DL) lie on the Cytoplasmic side of the membrane. Residues 274–294 (AGITCGHFLVPFWTFFGATLI) traverse the membrane as a helical segment. The Extracellular segment spans residues 295-305 (GKAIIKMHIQK). A helical membrane pass occupies residues 306 to 326 (IFVIITFSKHIVEQMVAFIGA). Over 327 to 363 (VPGIGPSLQKPFQEYLEAQRQKLHHKSEMGTPQGENW) the chain is Cytoplasmic. A helical transmembrane segment spans residues 364 to 384 (LSWMFEKLVVVMVCYFILSII). Topologically, residues 385 to 406 (NSMAQSYAKRIQQRLNSEEKTK) are extracellular.

It belongs to the VMP1 family. As to quaternary structure, interacts with BECN1. Interacts with TJP1. Interacts with TP53INP2. Interacts with TMEM41B. Interacts with ATP2A2, PLN and SLN; competes with PLN and SLN to prevent them from forming an inhibitory complex with ATP2A2. Interacts with ATG2A.

It is found in the endoplasmic reticulum-Golgi intermediate compartment membrane. Its subcellular location is the cell membrane. The protein localises to the vacuole membrane. The protein resides in the endoplasmic reticulum membrane. It catalyses the reaction a 1,2-diacyl-sn-glycero-3-phospho-L-serine(in) = a 1,2-diacyl-sn-glycero-3-phospho-L-serine(out). It carries out the reaction cholesterol(in) = cholesterol(out). The catalysed reaction is a 1,2-diacyl-sn-glycero-3-phosphocholine(in) = a 1,2-diacyl-sn-glycero-3-phosphocholine(out). The enzyme catalyses a 1,2-diacyl-sn-glycero-3-phosphoethanolamine(in) = a 1,2-diacyl-sn-glycero-3-phosphoethanolamine(out). Its function is as follows. Phospholipid scramblase involved in lipid homeostasis and membrane dynamics processes. Has phospholipid scramblase activity toward cholesterol and phosphatidylserine, as well as phosphatidylethanolamine and phosphatidylcholine. Required for autophagosome formation: participates in early stages of autophagosome biogenesis at the endoplasmic reticulum (ER) membrane by reequilibrating the leaflets of the ER as lipids are extracted by ATG2 (ATG2A or ATG2B) to mediate autophagosome assembly. Regulates ATP2A2 activity to control ER-isolation membrane contacts for autophagosome formation. In addition to autophagy, involved in other processes in which phospholipid scramblase activity is required. Modulates ER contacts with lipid droplets, mitochondria and endosomes. Plays an essential role in formation of cell junctions. Upon stress such as bacterial and viral infection, promotes formation of cytoplasmic vacuoles followed by cell death. Involved in the cytoplasmic vacuolization of acinar cells during the early stage of acute pancreatitis. (Microbial infection) Host factor required for infection by all flaviviruses tested such as Zika virus and Yellow fever virus. Probably required post-entry of the virus to facilitate the ER membrane remodeling necessary to form replication organelles. In Homo sapiens (Human), this protein is Vacuole membrane protein 1.